Here is a 391-residue protein sequence, read N- to C-terminus: UDP-galactose transporter homolog 1 (391 aa).

5 helical membrane-spanning segments follow: residues 3–23, 52–72, 126–147, 178–198, and 207–227; these read LLQL…WGLL, LFLN…YLLV, YILI…LRYI, YKYA…AFAP, and APES…VLDG. N-linked (GlcNAc...) asparagine glycosylation is present at Asn230. A run of 4 helical transmembrane segments spans residues 250 to 270, 298 to 318, 323 to 343, and 347 to 367; these read MMLV…TLPI, DIIA…ETLE, LTLV…SVVV, and ELSK…GIEA.

It belongs to the nucleotide-sugar transporter family. SLC35B subfamily.

It is found in the endoplasmic reticulum membrane. Its function is as follows. May be involved in specific transport of UDP-Gal from the cytosol to the Golgi lumen. Involved in the maintenance of optimal conditions for the folding of secretory pathway proteins in the endoplasmic reticulum. The protein is UDP-galactose transporter homolog 1 (HUT1) of Mycosarcoma maydis (Corn smut fungus).